The chain runs to 546 residues: Cyclic GMP-AMP synthase-like receptor (546 aa).

Residues 1-10 (MPVGSRQNRV) show a composition bias toward polar residues. 2 disordered regions span residues 1 to 116 (MPVG…CASR) and 134 to 186 (AKQE…RLTN). Residues 35–45 (YTERKERKDVQ) show a composition bias toward basic and acidic residues. Residues 69–80 (TSRTLRQTSQSR) are compositionally biased toward low complexity. Composition is skewed to basic and acidic residues over residues 82–95 (EVLE…DCKK) and 145–174 (KEGY…DKAT). The span at 175-186 (SHSTKGSFRLTN) shows a compositional bias: polar residues. Residues Ser-243 and 255 to 257 (EFD) contribute to the ATP site. Mg(2+) is bound by residues Glu-255, Asp-257, and Asp-374. GTP is bound by residues Asp-374 and 428–435 (RTSFSLAE). Residues 432-435 (SLAE), Lys-455, and 470-474 (SYHLK) contribute to the ATP site.

Belongs to the mab-21 family. It depends on Mg(2+) as a cofactor. Mn(2+) serves as cofactor.

The catalysed reaction is GTP + ATP = 2',3'-cGAMP + 2 diphosphate. The enzyme catalyses GTP + ATP = pppGp(2'-5')A + diphosphate. It carries out the reaction pppGp(2'-5')A = 2',3'-cGAMP + diphosphate. Functionally, nucleotidyltransferase that catalyzes the formation of cyclic GMP-AMP (2',3'-cGAMP) from ATP and GTP and plays a key role in innate immunity. Directly binds some unknown ligand, activating the nucleotidyltransferase activity, leading to synthesis of 2',3'-cGAMP, a second messenger that binds to and activates Sting, thereby triggering the immune response via activation of the NF-kappa-B transcription factor. In Exaiptasia diaphana (Tropical sea anemone), this protein is Cyclic GMP-AMP synthase-like receptor.